Reading from the N-terminus, the 746-residue chain is Teichoic acid poly(glycerol phosphate) polymerase (746 aa).

CDP-glycerol contacts are provided by residues 473–477 (WHGTP), R540, 573–574 (PT), 610–612 (RMH), 652–653 (SS), and D657.

This sequence belongs to the CDP-glycerol glycerophosphotransferase family.

The protein localises to the cell membrane. It carries out the reaction 4-O-[(2R)-glycerylphospho]-N-acetyl-beta-D-mannosaminyl-(1-&gt;4)-N-acetyl-alpha-D-glucosaminyl di-trans,octa-cis-undecaprenyl diphosphate + n CDP-glycerol = 4-O-{[(2R)-1-glycerylphospho](n)-(2R)-1-glycerylphospho}-N-acetyl-beta-D-mannosaminyl-(1-&gt;4)-N-acetyl-alpha-D-glucosaminyl undecaprenyl diphosphate + n CMP + n H(+). It functions in the pathway cell wall biogenesis; poly(glycerol phosphate) teichoic acid biosynthesis. Functionally, responsible for the polymerization of the main chain of the major teichoic acid by sequential transfer of glycerol phosphate units from CDP-glycerol to the disaccharide linkage unit. Synthesizes polymers of approximately 35 glycerol phosphate units in length. The sequence is that of Teichoic acid poly(glycerol phosphate) polymerase (tagF) from Bacillus subtilis (strain 168).